The sequence spans 400 residues: MKEKTIIIVGGGQAAAMAAASLRQQGFTGELHLFSDERHLPYERPPLSKSMLLEDSPQLQQVLPANWWQENNVHLHSGVTIKTLGRDTRELVLTNGESWHWDQLFIAIGAAARPLPLLDALGERCFTLRHAGDAARLREVLQPERSVVIVGAGTIGLELAASATQRRCKVTVIELAATVMGRNAPPPVQRYLLQRHQQAGVRILLNNAIEHVVDGEKVELTLQSGETLQADVVIYGIGISANEQLAREANLDTANGIVIDEACRTCDPAIFAGGDVAITRLDNGALHRCESWENANNQAQIAAAAMLGLPLPLLPPPWFWSDQYSDNLQFIGDMRGDDWLCRGNPETQKAIWFNLQNGVLIGAVTLNQGREIRPIRKWIQSGKTFDAKLLIDENIALKSL.

5–36 is an FAD binding site; that stretch reads TIIIVGGGQAAAMAAASLRQQGFTGELHLFSD. 146–174 serves as a coordination point for NAD(+); sequence SVVIVGAGTIGLELAASATQRRCKVTVIE.

The protein belongs to the bacterial ring-hydroxylating dioxygenase ferredoxin reductase family. As to quaternary structure, this dioxygenase system consists of four proteins: the two subunits of the hydroxylase component (HcaE and HcaF), a ferredoxin (HcaC) and a ferredoxin reductase (HcaD). FAD serves as cofactor.

It catalyses the reaction 2 reduced [2Fe-2S]-[ferredoxin] + NAD(+) + H(+) = 2 oxidized [2Fe-2S]-[ferredoxin] + NADH. It functions in the pathway aromatic compound metabolism; 3-phenylpropanoate degradation. Functionally, part of the multicomponent 3-phenylpropionate dioxygenase, that converts 3-phenylpropionic acid (PP) and cinnamic acid (CI) into 3-phenylpropionate-dihydrodiol (PP-dihydrodiol) and cinnamic acid-dihydrodiol (CI-dihydrodiol), respectively. The protein is 3-phenylpropionate/cinnamic acid dioxygenase ferredoxin--NAD(+) reductase component of Shigella sonnei (strain Ss046).